The primary structure comprises 307 residues: tRNA pseudouridine synthase B (307 aa).

Asp38 serves as the catalytic Nucleophile.

Belongs to the pseudouridine synthase TruB family. Type 1 subfamily.

It catalyses the reaction uridine(55) in tRNA = pseudouridine(55) in tRNA. In terms of biological role, responsible for synthesis of pseudouridine from uracil-55 in the psi GC loop of transfer RNAs. This chain is tRNA pseudouridine synthase B, found in Bacillus cereus (strain ATCC 10987 / NRS 248).